Reading from the N-terminus, the 327-residue chain is Undecaprenyl-phosphate 4-deoxy-4-formamido-L-arabinose transferase (327 aa).

2 helical membrane passes run 236–256 and 270–290; these read LSIF…LLVV and VFML…GMGL.

Belongs to the glycosyltransferase 2 family.

It is found in the cell inner membrane. It carries out the reaction UDP-4-deoxy-4-formamido-beta-L-arabinose + di-trans,octa-cis-undecaprenyl phosphate = 4-deoxy-4-formamido-alpha-L-arabinopyranosyl di-trans,octa-cis-undecaprenyl phosphate + UDP. It functions in the pathway glycolipid biosynthesis; 4-amino-4-deoxy-alpha-L-arabinose undecaprenyl phosphate biosynthesis; 4-amino-4-deoxy-alpha-L-arabinose undecaprenyl phosphate from UDP-4-deoxy-4-formamido-beta-L-arabinose and undecaprenyl phosphate: step 1/2. It participates in bacterial outer membrane biogenesis; lipopolysaccharide biosynthesis. In terms of biological role, catalyzes the transfer of 4-deoxy-4-formamido-L-arabinose from UDP to undecaprenyl phosphate. The modified arabinose is attached to lipid A and is required for resistance to polymyxin and cationic antimicrobial peptides. The chain is Undecaprenyl-phosphate 4-deoxy-4-formamido-L-arabinose transferase from Klebsiella pneumoniae subsp. pneumoniae (strain ATCC 700721 / MGH 78578).